We begin with the raw amino-acid sequence, 203 residues long: Glycerol-3-phosphate acyltransferase (203 aa).

Transmembrane regions (helical) follow at residues 5 to 25, 50 to 70, 72 to 92, 115 to 135, 140 to 160, and 162 to 182; these read IASI…FSLL, TCGF…GALP, IAAQ…TAAM, VVLT…AVTF, ISAV…AVLL, and LGML…AIVF.

This sequence belongs to the PlsY family. Probably interacts with PlsX.

The protein localises to the cell membrane. The catalysed reaction is an acyl phosphate + sn-glycerol 3-phosphate = a 1-acyl-sn-glycero-3-phosphate + phosphate. It participates in lipid metabolism; phospholipid metabolism. Functionally, catalyzes the transfer of an acyl group from acyl-phosphate (acyl-PO(4)) to glycerol-3-phosphate (G3P) to form lysophosphatidic acid (LPA). This enzyme utilizes acyl-phosphate as fatty acyl donor, but not acyl-CoA or acyl-ACP. This is Glycerol-3-phosphate acyltransferase from Roseiflexus sp. (strain RS-1).